A 180-amino-acid polypeptide reads, in one-letter code: Probable phospholipid hydroperoxide glutathione peroxidase (180 aa).

Residue cysteine 54 is part of the active site.

The protein belongs to the glutathione peroxidase family.

It is found in the cytoplasm. The enzyme catalyses a hydroperoxy polyunsaturated fatty acid + 2 glutathione = a hydroxy polyunsaturated fatty acid + glutathione disulfide + H2O. Protects cells and enzymes from oxidative damage, by catalyzing the reduction of hydrogen peroxide, lipid peroxides and organic hydroperoxide, by glutathione. This Helianthus annuus (Common sunflower) protein is Probable phospholipid hydroperoxide glutathione peroxidase (GPXHA-2).